The sequence spans 74 residues: Translational regulator CsrA (74 aa).

This sequence belongs to the CsrA/RsmA family. Homodimer; the beta-strands of each monomer intercalate to form a hydrophobic core, while the alpha-helices form wings that extend away from the core.

Its subcellular location is the cytoplasm. A translational regulator that binds mRNA to regulate translation initiation and/or mRNA stability. Usually binds in the 5'-UTR at or near the Shine-Dalgarno sequence preventing ribosome-binding, thus repressing translation. Its main target seems to be the major flagellin gene, while its function is anatagonized by FliW. The chain is Translational regulator CsrA from Bacillus velezensis (strain DSM 23117 / BGSC 10A6 / LMG 26770 / FZB42) (Bacillus amyloliquefaciens subsp. plantarum).